We begin with the raw amino-acid sequence, 707 residues long: Polyribonucleotide nucleotidyltransferase (707 aa).

Residues D486 and D492 each contribute to the Mg(2+) site. A KH domain is found at 553–612 (PTVTTLRVLPDKIPIIIGPAGKNIKKIIEETKVKIDLDPEGLVKIYATSKEAAEKAVSMI). The S1 motif domain occupies 622–690 (GEVYMGKVTR…DQGRIKVSLK (69 aa)).

The protein belongs to the polyribonucleotide nucleotidyltransferase family. The cofactor is Mg(2+).

It is found in the cytoplasm. It carries out the reaction RNA(n+1) + phosphate = RNA(n) + a ribonucleoside 5'-diphosphate. In terms of biological role, involved in mRNA degradation. Catalyzes the phosphorolysis of single-stranded polyribonucleotides processively in the 3'- to 5'-direction. The polypeptide is Polyribonucleotide nucleotidyltransferase (Sulfurihydrogenibium azorense (strain DSM 15241 / OCM 825 / Az-Fu1)).